The following is a 578-amino-acid chain: Proline--tRNA ligase (578 aa).

Belongs to the class-II aminoacyl-tRNA synthetase family. ProS type 1 subfamily. As to quaternary structure, homodimer.

It localises to the cytoplasm. The catalysed reaction is tRNA(Pro) + L-proline + ATP = L-prolyl-tRNA(Pro) + AMP + diphosphate. Catalyzes the attachment of proline to tRNA(Pro) in a two-step reaction: proline is first activated by ATP to form Pro-AMP and then transferred to the acceptor end of tRNA(Pro). As ProRS can inadvertently accommodate and process non-cognate amino acids such as alanine and cysteine, to avoid such errors it has two additional distinct editing activities against alanine. One activity is designated as 'pretransfer' editing and involves the tRNA(Pro)-independent hydrolysis of activated Ala-AMP. The other activity is designated 'posttransfer' editing and involves deacylation of mischarged Ala-tRNA(Pro). The misacylated Cys-tRNA(Pro) is not edited by ProRS. This Burkholderia cenocepacia (strain ATCC BAA-245 / DSM 16553 / LMG 16656 / NCTC 13227 / J2315 / CF5610) (Burkholderia cepacia (strain J2315)) protein is Proline--tRNA ligase.